Reading from the N-terminus, the 79-residue chain is Immunity protein CdiI (79 aa).

A run of 2 helical transmembrane segments spans residues 12-32 and 51-71; these read IIFFPMLCTVLGLLGIPIGLI and VVLFTLKIGIPIGFILGLGLW.

Probably interacts with cognate toxin CdiA.

It localises to the cell inner membrane. In terms of biological role, immunity protein component of a toxin-immunity protein module, which functions as a cellular contact-dependent growth inhibition (CDI) system. CDI modules allow bacteria to communicate with and inhibit the growth of closely related neighboring bacteria in a contact-dependent fashion. Protects cells against CdiA from the same strain, its cognate toxin protein. Growth inhibition is reversible upon induction of this protein, occurring about 2.5 hours after induction, and requires an energy source. Does not protect against non-cognate CdiA from E.coli strain 563 / UPEC, D.dadantii strain 3937 or Y.pestis strain CO92. This Escherichia coli protein is Immunity protein CdiI.